The primary structure comprises 223 residues: Large ribosomal subunit protein uL4c (223 aa).

The segment at 61–96 (TKTRSEVEGGGKKPWKQKGTGNARAGSSNSPLWKGG) is disordered.

This sequence belongs to the universal ribosomal protein uL4 family. In terms of assembly, part of the 50S ribosomal subunit.

It is found in the plastid. The protein resides in the chloroplast. Probably binds the 23S rRNA. The sequence is that of Large ribosomal subunit protein uL4c (rpl4) from Guillardia theta (Cryptophyte).